A 225-amino-acid polypeptide reads, in one-letter code: GTP cyclohydrolase 1 (225 aa).

Residues 1 to 12 (MERSKQSHDNQA) are compositionally biased toward basic and acidic residues. Residues 1 to 59 (MERSKQSHDNQADSRPTTNESSLNGHFDGLVKKTPGMWDVKGRGTAGESSSHTGSSVVE) are disordered. Composition is skewed to polar residues over residues 13–24 (DSRPTTNESSLN) and 47–58 (GESSSHTGSSVV). Residues Cys149, His152, and Cys220 each coordinate Zn(2+).

The protein belongs to the GTP cyclohydrolase I family. Toroid-shaped homodecamer, composed of two pentamers of five dimers.

The protein resides in the cytoplasm. It is found in the nucleus. It catalyses the reaction GTP + H2O = 7,8-dihydroneopterin 3'-triphosphate + formate + H(+). It participates in cofactor biosynthesis; 7,8-dihydroneopterin triphosphate biosynthesis; 7,8-dihydroneopterin triphosphate from GTP: step 1/1. Its activity is regulated as follows. GTP shows a positive allosteric effect, and tetrahydrobiopterin inhibits the enzyme activity. Zinc is required for catalytic activity. Inhibited by Mg(2+). In terms of biological role, may positively regulate nitric oxide synthesis in endothelial cells. May be involved in dopamine synthesis. May modify pain sensitivity and persistence. This is GTP cyclohydrolase 1 (gch1) from Oncorhynchus mykiss (Rainbow trout).